The primary structure comprises 98 residues: Small ribosomal subunit protein bS18c (98 aa).

Positions 1–13 (MSKQSFDFKRYKP) are enriched in basic and acidic residues. Residues 1–26 (MSKQSFDFKRYKPEAPSGSRKRPLKK) form a disordered region.

This sequence belongs to the bacterial ribosomal protein bS18 family. In terms of assembly, part of the 30S ribosomal subunit.

Its subcellular location is the plastid. The protein localises to the chloroplast. The sequence is that of Small ribosomal subunit protein bS18c from Gnetum parvifolium (Small-leaved jointfir).